Here is a 689-residue protein sequence, read N- to C-terminus: Protein asunder (689 aa).

The stretch at asparagine 521–threonine 550 forms a coiled coil. The interval glycine 578–arginine 619 is disordered. The span at serine 600–lysine 614 shows a compositional bias: low complexity. The Nuclear localization signal (NLS) motif lies at leucine 613–arginine 619.

Belongs to the Integrator subunit 13 family. In terms of assembly, belongs to the multiprotein complex Integrator, at least composed of IntS1, IntS2, IntS3, IntS4, omd/IntS5, IntS6, defl/IntS7, IntS8, IntS9, IntS10, IntS11, IntS12, asun/IntS13, IntS14 and IntS15. The core complex associates with protein phosphatase 2A subunits mts/PP2A and Pp2A-29B, to form the Integrator-PP2A (INTAC) complex. In terms of processing, phosphorylated.

It localises to the nucleus. The protein resides in the cytoplasm. It is found in the perinuclear region. Component of the integrator complex, a multiprotein complex that terminates RNA polymerase II (Pol II) transcription in the promoter-proximal region of genes. The integrator complex provides a quality checkpoint during transcription elongation by driving premature transcription termination of transcripts that are unfavorably configured for transcriptional elongation: the complex terminates transcription by (1) catalyzing dephosphorylation of the C-terminal domain (CTD) of Pol II subunit Polr2A/Rbp1 and Spt5, and (2) degrading the exiting nascent RNA transcript via endonuclease activity. The integrator complex is also involved in the 3'-end processing of the U7 snRNA, and also the spliceosomal snRNAs U1, U2, U4 and U5. This Drosophila erecta (Fruit fly) protein is Protein asunder (asun).